The chain runs to 397 residues: Tryptophan synthase beta chain (397 aa).

Lysine 88 bears the N6-(pyridoxal phosphate)lysine mark.

It belongs to the TrpB family. Tetramer of two alpha and two beta chains. The cofactor is pyridoxal 5'-phosphate.

The catalysed reaction is (1S,2R)-1-C-(indol-3-yl)glycerol 3-phosphate + L-serine = D-glyceraldehyde 3-phosphate + L-tryptophan + H2O. It functions in the pathway amino-acid biosynthesis; L-tryptophan biosynthesis; L-tryptophan from chorismate: step 5/5. In terms of biological role, the beta subunit is responsible for the synthesis of L-tryptophan from indole and L-serine. This chain is Tryptophan synthase beta chain, found in Shewanella amazonensis (strain ATCC BAA-1098 / SB2B).